The following is a 656-amino-acid chain: DNA topoisomerase 3 (656 aa).

One can recognise a Toprim domain in the interval 2 to 156; the sequence is KVLCVAEKNS…QVYRAVFSHL (155 aa). In terms of domain architecture, Topo IA-type catalytic spans 172-635; the sequence is DMKSVHAVGT…DIVEKYRKYW (464 aa). The active-site O-(5'-phospho-DNA)-tyrosine intermediate is the Tyr-356.

Belongs to the type IA topoisomerase family. Forms a complex with SGS1 and RMI1. Interacts with SGS1.

The catalysed reaction is ATP-independent breakage of single-stranded DNA, followed by passage and rejoining.. Its function is as follows. Releases the supercoiling and torsional tension of DNA introduced during the DNA replication and transcription by transiently cleaving and rejoining one strand of the DNA duplex. Introduces a single-strand break via transesterification at a target site in duplex DNA. The scissile phosphodiester is attacked by the catalytic tyrosine of the enzyme, resulting in the formation of a DNA-(5'-phosphotyrosyl)-enzyme intermediate and the expulsion of a 3'-OH DNA strand. The free DNA strand than undergoes passage around the unbroken strand thus removing DNA supercoils. Finally, in the religation step, the DNA 3'-OH attacks the covalent intermediate to expel the active-site tyrosine and restore the DNA phosphodiester backbone. Essential for proper chromosome segregation in both meiosis and mitosis. Weakly relaxes negative supercoils and displays a distinct preference for binding single-stranded DNA. The TOP3-SGS1 protein complex may function as a eukaryotic reverse gyrase introducing positive supercoils into extrachromosomal ribosomal DNA rings. The sequence is that of DNA topoisomerase 3 (TOP3) from Saccharomyces cerevisiae (strain ATCC 204508 / S288c) (Baker's yeast).